The following is a 302-amino-acid chain: Sulfate adenylyltransferase subunit 2 (302 aa).

The protein belongs to the PAPS reductase family. CysD subfamily. In terms of assembly, heterodimer composed of CysD, the smaller subunit, and CysN.

It catalyses the reaction sulfate + ATP + H(+) = adenosine 5'-phosphosulfate + diphosphate. It functions in the pathway sulfur metabolism; hydrogen sulfide biosynthesis; sulfite from sulfate: step 1/3. Functionally, with CysN forms the ATP sulfurylase (ATPS) that catalyzes the adenylation of sulfate producing adenosine 5'-phosphosulfate (APS) and diphosphate, the first enzymatic step in sulfur assimilation pathway. APS synthesis involves the formation of a high-energy phosphoric-sulfuric acid anhydride bond driven by GTP hydrolysis by CysN coupled to ATP hydrolysis by CysD. In Shigella dysenteriae serotype 1 (strain Sd197), this protein is Sulfate adenylyltransferase subunit 2.